The sequence spans 386 residues: 1-deoxy-D-xylulose 5-phosphate reductoisomerase (386 aa).

Residues threonine 13, glycine 14, serine 15, isoleucine 16, asparagine 40, and asparagine 122 each contribute to the NADPH site. Lysine 123 provides a ligand contact to 1-deoxy-D-xylulose 5-phosphate. Glutamate 124 lines the NADPH pocket. Aspartate 148 contributes to the Mn(2+) binding site. Positions 149, 150, 177, and 201 each coordinate 1-deoxy-D-xylulose 5-phosphate. Glutamate 150 contributes to the Mn(2+) binding site. Glycine 207 is a binding site for NADPH. 1-deoxy-D-xylulose 5-phosphate is bound by residues serine 214, asparagine 219, lysine 220, and glutamate 223. A Mn(2+)-binding site is contributed by glutamate 223.

Belongs to the DXR family. Requires Mg(2+) as cofactor. It depends on Mn(2+) as a cofactor.

It carries out the reaction 2-C-methyl-D-erythritol 4-phosphate + NADP(+) = 1-deoxy-D-xylulose 5-phosphate + NADPH + H(+). Its pathway is isoprenoid biosynthesis; isopentenyl diphosphate biosynthesis via DXP pathway; isopentenyl diphosphate from 1-deoxy-D-xylulose 5-phosphate: step 1/6. Its function is as follows. Catalyzes the NADPH-dependent rearrangement and reduction of 1-deoxy-D-xylulose-5-phosphate (DXP) to 2-C-methyl-D-erythritol 4-phosphate (MEP). The sequence is that of 1-deoxy-D-xylulose 5-phosphate reductoisomerase from Francisella tularensis subsp. holarctica (strain OSU18).